Here is an 823-residue protein sequence, read N- to C-terminus: DNA mismatch repair protein MutS (823 aa).

ATP is bound at residue 605–612 (GPNMSGKS).

It belongs to the DNA mismatch repair MutS family.

Its function is as follows. This protein is involved in the repair of mismatches in DNA. It is possible that it carries out the mismatch recognition step. This protein has a weak ATPase activity. In Fervidobacterium nodosum (strain ATCC 35602 / DSM 5306 / Rt17-B1), this protein is DNA mismatch repair protein MutS.